We begin with the raw amino-acid sequence, 360 residues long: Homeobox-leucine zipper protein HOX21 (360 aa).

Disordered stretches follow at residues 25–75 (QQAA…SSAQ) and 88–126 (MLGK…EKKR). A compositionally biased stretch (basic residues) spans 36–55 (HHHHHHHGHHHEQQQHHHHL). Residues 56 to 68 (GPPPPPPPHPHNP) show a composition bias toward pro residues. The span at 97–109 (GDGGGGGDEVNGG) shows a compositional bias: gly residues. Positions 121–180 (AGEKKRRLNVEQVRTLEKNFELGNKLEPERKMQLARALGLQPRQVAIWFQNRRARWKTKQ) form a DNA-binding region, homeobox. Residues 179–223 (KQLEKDYDALKRQLDAVKAENDALLNHNKKLQAEIVALKGREAAS) are leucine-zipper. Disordered regions lie at residues 233–278 (EASC…GGGG) and 299–328 (GVDI…GNVQ). Polar residues predominate over residues 234-246 (ASCSNRSENSSEI).

The protein belongs to the HD-ZIP homeobox family. Class I subfamily. As to expression, expressed in seedlings, roots, stems, leaf blades and panicles.

The protein localises to the nucleus. Functionally, probable transcription factor. The sequence is that of Homeobox-leucine zipper protein HOX21 (HOX21) from Oryza sativa subsp. indica (Rice).